The sequence spans 233 residues: Lipoprotein-releasing system ATP-binding protein LolD (233 aa).

The ABC transporter domain occupies 7–233 (IHCEKLSKTY…QLQSESERNH (227 aa)). Residue 43–50 (GASGAGKS) coordinates ATP.

Belongs to the ABC transporter superfamily. Lipoprotein translocase (TC 3.A.1.125) family. The complex is composed of two ATP-binding proteins (LolD) and two transmembrane proteins (LolC and LolE).

The protein localises to the cell inner membrane. In terms of biological role, part of the ABC transporter complex LolCDE involved in the translocation of mature outer membrane-directed lipoproteins, from the inner membrane to the periplasmic chaperone, LolA. Responsible for the formation of the LolA-lipoprotein complex in an ATP-dependent manner. In Coxiella burnetii (strain RSA 493 / Nine Mile phase I), this protein is Lipoprotein-releasing system ATP-binding protein LolD.